The sequence spans 743 residues: GTPase-activating protein gyp7 (743 aa).

Positions 411-633 (GIQPSLRKEV…KLWDVLFTNY (223 aa)) constitute a Rab-GAP TBC domain.

The protein resides in the cytoplasm. It localises to the nucleus. Functionally, most effectively accelerates the intrinsic GTPase activity of ypt7. The polypeptide is GTPase-activating protein gyp7 (Schizosaccharomyces pombe (strain 972 / ATCC 24843) (Fission yeast)).